We begin with the raw amino-acid sequence, 642 residues long: MPVITLPDGSKREFANPVSTLDVAADIGPGLAKACIAGRVNGELKDACDIIETDSELSIITAKDEEGVEILRHSCAHLLGHAIKQLFPETKMAIGPVIDNGFYYDIDLDHKLTQEDIDALEKRMAALAKTNYAVDKRVVSWQEARDTFEARGEDYKMAILDENIPKDSTPALYHHEEYIDMCRGPHVPNMKFCQNFKLMSVAGAYWRGNSDNKMLQRVYGTAWADKKALKVHLNRLEEAAKRDHRKIGKQLDLYHMQEEAPGMVFWHNDGWSLFLELEKFIRQKLGQYTYQEVKGPLMMDRVLWERSGHWDKYSDAMFTTSSENREYAIKPMNCPGHVQIFNQGLKSYRDLPLRMAEFGCCHRNEPSGSLHGLMRVRGFTQDDAHIFCTEEQVQQEVSACIRMVYDTYATFGFSNIVVKLSTRPEKRIGDDDMWDRAEEALKKALKANDIEFEILPGEGAFYGPKIEFTLHDCLDRAWQCGTVQLDYALPGRLGATYVAEDNSRQTPVMIHRAILGSLERFLGILIEEYAGKFPAWLSPVQVVVMNITDKQSDYVDNVVNLFKEHGIRATKDLRNEKIGFKIREHTLRRVPYLLVVGDQEMENNEVAVRTREGVDLGKMQLEEFATKLKNQISLRSLNLLED.

The 61-residue stretch at 1–61 (MPVITLPDGS…ETDSELSIIT (61 aa)) folds into the TGS domain. The tract at residues 243–534 (DHRKIGKQLD…LIEEYAGKFP (292 aa)) is catalytic. The Zn(2+) site is built by Cys334, His385, and His511.

The protein belongs to the class-II aminoacyl-tRNA synthetase family. As to quaternary structure, homodimer. Zn(2+) is required as a cofactor.

It localises to the cytoplasm. It catalyses the reaction tRNA(Thr) + L-threonine + ATP = L-threonyl-tRNA(Thr) + AMP + diphosphate + H(+). In terms of biological role, catalyzes the attachment of threonine to tRNA(Thr) in a two-step reaction: L-threonine is first activated by ATP to form Thr-AMP and then transferred to the acceptor end of tRNA(Thr). Also edits incorrectly charged L-seryl-tRNA(Thr). This is Threonine--tRNA ligase from Shewanella halifaxensis (strain HAW-EB4).